A 92-amino-acid chain; its full sequence is Small ribosomal subunit protein uS19 (92 aa).

This sequence belongs to the universal ribosomal protein uS19 family.

Protein S19 forms a complex with S13 that binds strongly to the 16S ribosomal RNA. The protein is Small ribosomal subunit protein uS19 of Corynebacterium jeikeium (strain K411).